The sequence spans 154 residues: 6,7-dimethyl-8-ribityllumazine synthase (154 aa).

Residues Phe-21, 55 to 57 (AFE), and 79 to 81 (CVI) contribute to the 5-amino-6-(D-ribitylamino)uracil site. 84-85 (AT) provides a ligand contact to (2S)-2-hydroxy-3-oxobutyl phosphate. The active-site Proton donor is His-87. 5-amino-6-(D-ribitylamino)uracil is bound at residue Phe-112. Arg-126 contacts (2S)-2-hydroxy-3-oxobutyl phosphate.

This sequence belongs to the DMRL synthase family. In terms of assembly, forms an icosahedral capsid composed of 60 subunits, arranged as a dodecamer of pentamers.

The catalysed reaction is (2S)-2-hydroxy-3-oxobutyl phosphate + 5-amino-6-(D-ribitylamino)uracil = 6,7-dimethyl-8-(1-D-ribityl)lumazine + phosphate + 2 H2O + H(+). It participates in cofactor biosynthesis; riboflavin biosynthesis; riboflavin from 2-hydroxy-3-oxobutyl phosphate and 5-amino-6-(D-ribitylamino)uracil: step 1/2. Functionally, catalyzes the formation of 6,7-dimethyl-8-ribityllumazine by condensation of 5-amino-6-(D-ribitylamino)uracil with 3,4-dihydroxy-2-butanone 4-phosphate. This is the penultimate step in the biosynthesis of riboflavin. This Staphylococcus aureus (strain Newman) protein is 6,7-dimethyl-8-ribityllumazine synthase.